The following is a 241-amino-acid chain: Fatty acid metabolism regulator protein (241 aa).

The HTH gntR-type domain occupies glutamine 11–isoleucine 79. A DNA-binding region (H-T-H motif) is located at residues glutamate 39 to glutamine 58.

Homodimer.

The protein resides in the cytoplasm. Functionally, multifunctional regulator of fatty acid metabolism. The polypeptide is Fatty acid metabolism regulator protein (Haemophilus influenzae (strain ATCC 51907 / DSM 11121 / KW20 / Rd)).